We begin with the raw amino-acid sequence, 380 residues long: Selenoprotein P (380 aa).

The N-terminal stretch at 1–19 is a signal peptide; the sequence is MWRSLGLALALCLLPYGGA. Selenocysteine 59 is a non-standard amino acid (selenocysteine). Asparagine 83, asparagine 176, and asparagine 195 each carry an N-linked (GlcNAc...) asparagine glycan. Residues 196–257 are disordered; it reads KTAEPSEAHS…RGQHRQGHLE (62 aa). The segment covering 221-237 has biased composition (polar residues); that stretch reads SKPSENQQPGPSETTLP. The span at 241–253 shows a compositional bias: basic residues; that stretch reads LHHHHRHRGQHRQ. Residue selenocysteine 259 is a non-standard amino acid, selenocysteine. Serine 264 is modified (phosphoserine). 4 non-standard amino acids (selenocysteine) are found at residues selenocysteine 277, selenocysteine 318, selenocysteine 330, and selenocysteine 352. Residues 346–380 are disordered; sequence RSPPAAUQNQPMNPMEANPNUSUDNQTRKUKUHSN. Residues 348–360 are compositionally biased toward low complexity; it reads PPAAUQNQPMNPM. Asparagine 365 carries an N-linked (GlcNAc...) asparagine glycan. Residues selenocysteine 366 and selenocysteine 368 are each a non-standard amino acid (selenocysteine). Residue asparagine 370 is glycosylated (N-linked (GlcNAc...) asparagine). Non-standard amino acids (selenocysteine) are located at selenocysteine 375 and selenocysteine 377.

The protein belongs to the selenoprotein P family. Phosphorylation sites are present in the extracellular medium. In the kidney, expressed in the cortex with no expression observed in the medulla (at protein level). Expressed by the liver and secreted in plasma.

The protein localises to the secreted. In terms of biological role, might be responsible for some of the extracellular antioxidant defense properties of selenium or might be involved in the transport of selenium. May supply selenium to tissues such as brain and testis. The sequence is that of Selenoprotein P from Mus musculus (Mouse).